Consider the following 147-residue polypeptide: Ribonuclease H (147 aa).

Residues D8, E46, D68, and D132 each contribute to the Mg(2+) site.

This sequence belongs to the RNase H family. Monomer. The cofactor is Mg(2+).

The protein resides in the cytoplasm. The catalysed reaction is Endonucleolytic cleavage to 5'-phosphomonoester.. Its function is as follows. Endonuclease that specifically degrades the RNA of RNA-DNA hybrids. This Geotalea uraniireducens (strain Rf4) (Geobacter uraniireducens) protein is Ribonuclease H.